Consider the following 143-residue polypeptide: Myocilin opposite strand protein (143 aa).

A disordered region spans residues 65-111 (MATRDETITKKSGEGEEMLPSMGMDHESPSKAHLMVPPAPPPSPADA). Basic and acidic residues predominate over residues 66–78 (ATRDETITKKSGE).

The polypeptide is Myocilin opposite strand protein (Mus musculus (Mouse)).